The primary structure comprises 268 residues: Resolvase (268 aa).

In terms of domain architecture, Tyr recombinase spans 47–250 (ELPKYLLAPE…FALDVAARHR (204 aa)). Residues Arg82, Lys114, His202, Arg205, and His228 contribute to the active site. Tyr237 functions as the O-(3'-phospho-DNA)-tyrosine intermediate in the catalytic mechanism.

The protein belongs to the 'phage' integrase family.

In terms of biological role, acts as a repressor of transcription and as a site-specific resolvase that cleaves at the RfsF site. The protein is Resolvase (resD) of Escherichia coli (strain K12).